The chain runs to 278 residues: ABC transporter I family member 11, chloroplastic (278 aa).

Residues 1–49 constitute a chloroplast transit peptide; it reads MAVSTFSSPTPVFGIAEPPASFSSTAIGWKQPLRFRRTKKPRVISCDYS. The region spanning 51–278 is the ABC transporter domain; the sequence is IEVRDVCYRP…GVLVAERPPL (228 aa). 85–92 contributes to the ATP binding site; it reads GKSGSGKT.

The protein belongs to the ABC transporter superfamily. ABCI family.

The protein localises to the plastid. It localises to the chloroplast. This Arabidopsis thaliana (Mouse-ear cress) protein is ABC transporter I family member 11, chloroplastic (ABCI11).